Consider the following 339-residue polypeptide: MTDRSPFETDMLTLTRYVMEKGRQAKGTGELTQLLNSMLTAIKAISSAVRKAGLAHLYGIAGTVNVTGDEVKKLDVLSNALVINMLQSSYSTCVLVSEENKEAIITAKERRGKYVVCFDPLDGSSNIDCLASIGTIFAIYRKTTEDEPSDKDALQPGRNIVAAGYALYGSATLVALSTGQGVDLFMLDPALGEFVLVEKDVKIKKKGKIFSLNEGYAKYFDAATTEYVQKKKFPEDGSAPYGARYVGSMVADVHRTLVYGGIFLYPANQKSPKGKLRLLYECNPVAYIIEQAGGLATTGTQPVLDVKPESIHQRVPLILGSPDDVQEYLACVQKNQAGR.

Positions D3–D10 are important for interaction with ALDOA. AMP is bound by residues V18 and T28–T32. Residues D69 and E98 each contribute to the Mg(2+) site. Residue K113–Y114 participates in AMP binding. 3 residues coordinate Mg(2+): D119, L121, and D122. D122 lines the substrate pocket. R141 provides a ligand contact to AMP. Residues K204–K208 carry the Nuclear localization signal motif. Position 213–216 (N213–Y216) interacts with substrate. Residues Y216 and Y219 each carry the phosphotyrosine modification. Substrate contacts are provided by residues Y245–M249, Y265, and K275. E281 contacts Mg(2+).

The protein belongs to the FBPase class 1 family. Homotetramer. Interacts with ALDOA; the interaction blocks inhibition by physiological concentrations of AMP and reduces inhibition by Ca(2+). Interacts with alpha-actinin and F-actin. Requires Mg(2+) as cofactor.

It localises to the cell junction. The protein localises to the cytoplasm. Its subcellular location is the nucleus. The protein resides in the myofibril. It is found in the sarcomere. It localises to the z line. It catalyses the reaction beta-D-fructose 1,6-bisphosphate + H2O = beta-D-fructose 6-phosphate + phosphate. The protein operates within carbohydrate biosynthesis; gluconeogenesis. Its activity is regulated as follows. Subject to complex allosteric regulation. The enzyme can assume an active R-state, or an inactive T-state. Intermediate conformations may exist. AMP acts as an allosteric inhibitor. Fructose 2,6-bisphosphate acts as a competitive inhibitor. Strongly inhibited by Ca(2+). Catalyzes the hydrolysis of fructose 1,6-bisphosphate to fructose 6-phosphate in the presence of divalent cations and probably participates in glycogen synthesis from carbohydrate precursors, such as lactate. The sequence is that of Fructose-1,6-bisphosphatase isozyme 2 (FBP2) from Oryctolagus cuniculus (Rabbit).